Here is an 89-residue protein sequence, read N- to C-terminus: Cell division topological specificity factor (89 aa).

It belongs to the MinE family.

Its function is as follows. Prevents the cell division inhibition by proteins MinC and MinD at internal division sites while permitting inhibition at polar sites. This ensures cell division at the proper site by restricting the formation of a division septum at the midpoint of the long axis of the cell. The polypeptide is Cell division topological specificity factor (Photorhabdus laumondii subsp. laumondii (strain DSM 15139 / CIP 105565 / TT01) (Photorhabdus luminescens subsp. laumondii)).